We begin with the raw amino-acid sequence, 212 residues long: Thymidylate kinase (212 aa).

15–22 (GIDGAGKS) serves as a coordination point for ATP.

The protein belongs to the thymidylate kinase family.

It carries out the reaction dTMP + ATP = dTDP + ADP. In terms of biological role, phosphorylation of dTMP to form dTDP in both de novo and salvage pathways of dTTP synthesis. This chain is Thymidylate kinase, found in Chromobacterium violaceum (strain ATCC 12472 / DSM 30191 / JCM 1249 / CCUG 213 / NBRC 12614 / NCIMB 9131 / NCTC 9757 / MK).